We begin with the raw amino-acid sequence, 689 residues long: Glycine--tRNA ligase beta subunit (689 aa).

The protein belongs to the class-II aminoacyl-tRNA synthetase family. As to quaternary structure, tetramer of two alpha and two beta subunits.

It is found in the cytoplasm. The enzyme catalyses tRNA(Gly) + glycine + ATP = glycyl-tRNA(Gly) + AMP + diphosphate. The sequence is that of Glycine--tRNA ligase beta subunit from Salmonella agona (strain SL483).